A 373-amino-acid chain; its full sequence is Carnosine N-methyltransferase (373 aa).

Positions 110, 113, 154, 175, 242, 243, and 262 each coordinate S-adenosyl-L-methionine. A carnosine-binding site is contributed by D266. Y274 lines the S-adenosyl-L-methionine pocket. Carnosine contacts are provided by H297 and Y356.

This sequence belongs to the carnosine N-methyltransferase family.

It localises to the cytoplasm. Its subcellular location is the nucleus. It catalyses the reaction carnosine + S-adenosyl-L-methionine = anserine + S-adenosyl-L-homocysteine + H(+). Its function is as follows. N-methyltransferase that mediates the formation of anserine (beta-alanyl-N(Pi)-methyl-L-histidine) from carnosine. Also methylates other L-histidine-containing di- and tripeptides such as Gly-Gly-His, Gly-His and homocarnosine (GABA-His). The polypeptide is Carnosine N-methyltransferase (Schizosaccharomyces pombe (strain 972 / ATCC 24843) (Fission yeast)).